Reading from the N-terminus, the 500-residue chain is Probable cytosol aminopeptidase (500 aa).

Mn(2+)-binding residues include Lys-264 and Asp-269. The active site involves Lys-276. Residues Asp-287, Asp-346, and Glu-348 each coordinate Mn(2+). Residue Arg-350 is part of the active site.

The protein belongs to the peptidase M17 family. Mn(2+) is required as a cofactor.

It is found in the cytoplasm. It carries out the reaction Release of an N-terminal amino acid, Xaa-|-Yaa-, in which Xaa is preferably Leu, but may be other amino acids including Pro although not Arg or Lys, and Yaa may be Pro. Amino acid amides and methyl esters are also readily hydrolyzed, but rates on arylamides are exceedingly low.. The catalysed reaction is Release of an N-terminal amino acid, preferentially leucine, but not glutamic or aspartic acids.. Presumably involved in the processing and regular turnover of intracellular proteins. Catalyzes the removal of unsubstituted N-terminal amino acids from various peptides. In Nitrobacter winogradskyi (strain ATCC 25391 / DSM 10237 / CIP 104748 / NCIMB 11846 / Nb-255), this protein is Probable cytosol aminopeptidase.